Here is a 413-residue protein sequence, read N- to C-terminus: Aminopeptidase PepS (413 aa).

6 residues coordinate a divalent metal cation: Glu-253, Glu-319, Glu-343, His-348, His-381, and Asp-383.

The protein belongs to the peptidase M29 family. In terms of assembly, monomer. Requires Co(2+) as cofactor. The cofactor is Zn(2+). Mg(2+) serves as cofactor.

In terms of biological role, exhibits a high specificity towards peptides possessing arginine or aromatic amino acids at the N-terminus. Could be involved both in bacterial growth by supplying amino acids. In Streptococcus thermophilus, this protein is Aminopeptidase PepS (pepS).